The chain runs to 415 residues: Gamma-glutamyl phosphate reductase (415 aa).

The protein belongs to the gamma-glutamyl phosphate reductase family.

The protein resides in the cytoplasm. The enzyme catalyses L-glutamate 5-semialdehyde + phosphate + NADP(+) = L-glutamyl 5-phosphate + NADPH + H(+). It participates in amino-acid biosynthesis; L-proline biosynthesis; L-glutamate 5-semialdehyde from L-glutamate: step 2/2. Catalyzes the NADPH-dependent reduction of L-glutamate 5-phosphate into L-glutamate 5-semialdehyde and phosphate. The product spontaneously undergoes cyclization to form 1-pyrroline-5-carboxylate. This chain is Gamma-glutamyl phosphate reductase, found in Listeria innocua serovar 6a (strain ATCC BAA-680 / CLIP 11262).